Here is a 510-residue protein sequence, read N- to C-terminus: Insulinoma-associated protein 1 (510 aa).

The segment covering 1 to 12 has biased composition (basic residues); that stretch reads MPRGFLVKRSKK. The tract at residues 1-20 is SNAG domain; sequence MPRGFLVKRSKKSTPVSYRV. Disordered stretches follow at residues 1–110 and 176–226; these read MPRG…SREH and GAEA…PKAI. Residues 2-7 are required and sufficient for interaction with KDM1A; the sequence is PRGFLV. Positions 43-58 are necessary for interaction with CCND1; the sequence is PPAPSPVPGPLPPPPP. The span at 43–59 shows a compositional bias: pro residues; it reads PPAPSPVPGPLPPPPPA. 2 stretches are compositionally biased toward low complexity: residues 64-74 and 209-218; these read AALAAALACAP and EPPAKAVKAP. Residues 267–287 form a C2H2-type 1; atypical zinc finger; that stretch reads FICQLCKEEYADPFALAQHKC. The C2H2-type 2 zinc finger occupies 295-317; that stretch reads YRCPECAKVFSCPANLASHRRWH. A disordered region spans residues 315 to 362; the sequence is RWHKPRPAPAAARAPEPEAAARAEAREAPGGGSDRDTPSPGGVSESGS. Over residues 329–351 the composition is skewed to basic and acidic residues; the sequence is PEPEAAARAEAREAPGGGSDRDT. C2H2-type zinc fingers lie at residues 367 to 389, 441 to 464, and 469 to 492; these read YECH…LLAH, HLCP…RLLH, and FPCK…NKCH.

This sequence belongs to the INSM1 family. As to quaternary structure, interacts (via the SNAG domain) with HDAC1. Interacts (via the SNAG domain) with HDAC2. Interacts (via the SNAG domain) with KDM1A. Interacts (via the SNAG domain) with RCOR1. Interacts with SORBS1. Interacts (via the N-terminal region) with CCND1 (via cyclin N-terminal domain); the interaction competes with the binding of CCND1 to CDK4 during cell cycle progression and increases its transcriptional repressor activity. Interacts with HDAC3; the interaction increases its transcriptional repressor activity. As to expression, expressed in pancreatic duct cells. Expressed in several tumor cell lines of neuroendocrine origin including pheochromocytoma, medullary thyroid carcinoma, insulinoma, medulloblastoma, retinoblastoma, pheochromacytoma, medullary thyroid carcinoma and small cell lung carcinoma.

It is found in the nucleus. Its function is as follows. Sequence-specific DNA-binding transcriptional regulator that plays a key role in neurogenesis and neuroendocrine cell differentiation during embryonic and/or fetal development. Binds to the consensus sequence 5'-[TG][TC][TC][TT][GA]GGG[CG]A-3' in target promoters. Acts as a transcriptional repressor of NEUROD1 and INS expression via its interaction with cyclin CCND1 in a cell cycle-independent manner. Negatively regulates skeletal muscle-specific gene expression in endocrine cells of the pituitary by inhibiting the Notch signaling pathway. Represses target gene transcription by recruiting chromatin-modifying factors, such as HDAC1, HDAC2, HDAC3, KDM1A and RCOR1 histone deacetylases. Binds to its own promoter, suggesting autoregulation as a self-control feedback mechanism. Competes with histone H3 for the same binding site on the histone demethylase complex formed by KDM1A and RCOR1, and thereby inhibits demethylation of histone H3 at 'Lys-4'. Promotes the generation and expansion of neuronal basal progenitor cells in the developing neocortex. Involved in the differentiation of endocrine cells of the developing anterior pituitary gland, of the pancreas and intestine, and of sympatho-adrenal cells in the peripheral nervous system. Promotes cell cycle signaling arrest and inhibition of cellular proliferation. The sequence is that of Insulinoma-associated protein 1 (INSM1) from Homo sapiens (Human).